The primary structure comprises 352 residues: C-C chemokine receptor type 5 (352 aa).

Over 1–30 (MDYQVSSPTYDIDYYTSEPCQKVNVKQIAA) the chain is Extracellular. Tyr3 is modified (sulfotyrosine). O-linked (GalNAc...) serine glycans are attached at residues Ser6 and Ser7. Tyr10, Tyr14, and Tyr15 each carry sulfotyrosine. 2 cysteine pairs are disulfide-bonded: Cys20–Cys269 and Cys101–Cys178. A helical transmembrane segment spans residues 31–58 (RLLPPLYSLVFIFGFVGNILVVLILINC). Residues 59–68 (KRLKSMTDIY) are Cytoplasmic-facing. A helical transmembrane segment spans residues 69–89 (LLNLAISDLFFLLTVPFWAHY). The Extracellular portion of the chain corresponds to 90-102 (AAAQWDFGNTMCQ). A helical transmembrane segment spans residues 103–124 (LLTGLYFIGFFSGIFFIILLTI). Residues 125 to 141 (DRYLAIVHAVFALKART) lie on the Cytoplasmic side of the membrane. The helical transmembrane segment at 142 to 166 (VTFGVVTSVITWVVAVFASLPGIIF) threads the bilayer. At 167–198 (TRSQREGVHYTCSSHFPYSQYQFWKNFQTLKI) the chain is on the extracellular side. The chain crosses the membrane as a helical span at residues 199 to 218 (VILGLVLPLLVMVICYSGIL). The Cytoplasmic segment spans residues 219 to 235 (KTLLRCRNEKKRHRAVR). The helical transmembrane segment at 236-260 (LIFTIMIVYFLFWAPYNIVLLLNTF) threads the bilayer. At 261–277 (QEFFGLNNCSSSNRLDQ) the chain is on the extracellular side. Residues 278–301 (AMQVTETLGMTHCCINPIIYAFVG) traverse the membrane as a helical segment. The Cytoplasmic segment spans residues 302–352 (EKFRNYLLVFFQKHIAKRFCKCCSIFQQEAPERASSVYTRSTGEQETSVGL). S-palmitoyl cysteine attachment occurs at residues Cys321, Cys323, and Cys324. 4 positions are modified to phosphoserine; by BARK1: Ser336, Ser337, Ser342, and Ser349.

The protein belongs to the G-protein coupled receptor 1 family. Interacts with PRAF2. Efficient ligand binding to CCL3/MIP-1alpha and CCL4/MIP-1beta requires sulfation, O-glycosylation and sialic acid modifications. Glycosylation on Ser-6 is required for efficient binding of CCL4. Interacts with GRK2. Interacts with ARRB1 and ARRB2. Interacts with CNIH4. Interacts with S100A4; this interaction stimulates T-lymphocyte chemotaxis. Post-translationally, sulfated on at least 2 of the N-terminal tyrosines. Sulfation is required for efficient binding of the chemokines, CCL3 and CCL4. In terms of processing, palmitoylation in the C-terminal is important for cell surface expression. Phosphorylation on serine residues in the C-terminal is stimulated by binding CC chemokines especially by APO-RANTES. Post-translationally, O-glycosylated, but not N-glycosylated. Ser-6 appears to be the major site even if Ser-7 may be also O-glycosylated. Also sialylated glycans present which contribute to chemokine binding. Thr-16 and Ser-17 may also be glycosylated and, if so, with small moieties such as a T-antigen.

The protein localises to the cell membrane. In terms of biological role, receptor for a number of inflammatory CC-chemokines including CCL3/MIP-1-alpha, CCL4/MIP-1-beta and RANTES and subsequently transduces a signal by increasing the intracellular calcium ion level. May play a role in the control of granulocytic lineage proliferation or differentiation. Participates in T-lymphocyte migration to the infection site by acting as a chemotactic receptor. This chain is C-C chemokine receptor type 5 (CCR5), found in Rhinopithecus avunculus (Tonkin snub-nosed monkey).